Here is a 393-residue protein sequence, read N- to C-terminus: Putative F-box protein At1g55070 (393 aa).

Residues 29–74 (GEYFDRIPADLVIKILSKLSAKSMAKCRCVCKLLSSIIRQPNYNQL) form the F-box domain.

The chain is Putative F-box protein At1g55070 from Arabidopsis thaliana (Mouse-ear cress).